The sequence spans 344 residues: Arginine N-succinyltransferase (344 aa).

Leu125 serves as a coordination point for succinyl-CoA. His229 acts as the Proton donor in catalysis.

This sequence belongs to the arginine N-succinyltransferase family.

The enzyme catalyses succinyl-CoA + L-arginine = N(2)-succinyl-L-arginine + CoA + H(+). Its pathway is amino-acid degradation; L-arginine degradation via AST pathway; L-glutamate and succinate from L-arginine: step 1/5. In terms of biological role, catalyzes the transfer of succinyl-CoA to arginine to produce N(2)-succinylarginine. This chain is Arginine N-succinyltransferase, found in Escherichia fergusonii (strain ATCC 35469 / DSM 13698 / CCUG 18766 / IAM 14443 / JCM 21226 / LMG 7866 / NBRC 102419 / NCTC 12128 / CDC 0568-73).